A 137-amino-acid polypeptide reads, in one-letter code: Large ribosomal subunit protein uL16 (137 aa).

Belongs to the universal ribosomal protein uL16 family. As to quaternary structure, part of the 50S ribosomal subunit.

In terms of biological role, binds 23S rRNA and is also seen to make contacts with the A and possibly P site tRNAs. The polypeptide is Large ribosomal subunit protein uL16 (Francisella tularensis subsp. tularensis (strain FSC 198)).